The chain runs to 414 residues: uncharacterized protein (414 aa).

At 1 to 66 the chain is on the lumenal side; the sequence is MNPSVPKVMK…LQRISKDYLK (66 aa). The disordered stretch occupies residues 20 to 51; the sequence is SKEMNDTSLQLPSTTRSLSPKESNSNEDFNVD. Positions 25–51 are enriched in polar residues; that stretch reads DTSLQLPSTTRSLSPKESNSNEDFNVD. Lys-40 participates in a covalent cross-link: Glycyl lysine isopeptide (Lys-Gly) (interchain with G-Cter in ubiquitin). Residues 67-87 traverse the membrane as a helical segment; the sequence is PNIGLVLLTVSYFFNSAMVVS. The EamA 1 domain maps to 78-215; the sequence is YFFNSAMVVS…SLLGVVLIVR (138 aa). Residues 88–106 lie on the Cytoplasmic side of the membrane; the sequence is TKVLENDPDDIANDRQIKP. A helical transmembrane segment spans residues 107–127; the sequence is LQILLVRMVITYIGTLIYMYI. Residues 128-144 lie on the Lumenal side of the membrane; the sequence is NKSTISDVPFGKPEVRK. The chain crosses the membrane as a helical span at residues 145 to 167; sequence WLVLRGCTGFFGVFGMYYSLMYL. Topologically, residues 168–171 are cytoplasmic; it reads TISD. The chain crosses the membrane as a helical span at residues 172 to 191; sequence AVLITFLAPSLTIFLSWVIL. At 192 to 199 the chain is on the lumenal side; sequence RERFTKVE. A helical membrane pass occupies residues 200-220; it reads ALGSLISLLGVVLIVRPSFLF. The Cytoplasmic segment spans residues 221 to 241; the sequence is GTPELTDSSSQIVESSDPKSR. A helical transmembrane segment spans residues 242–262; that stretch reads LIATLVGLWGVLGMSCVYIII. The 127-residue stretch at 253-379 folds into the EamA 2 domain; the sequence is LGMSCVYIII…IISATLWVIR (127 aa). The Lumenal segment spans residues 263–269; sequence RYIGKRA. A helical membrane pass occupies residues 270 to 290; that stretch reads HAIMSVSYFSLITAIVSFIGI. Over 291-307 the chain is Cytoplasmic; sequence NTIPSMKFQIPHSKKQW. The chain crosses the membrane as a helical span at residues 308–328; the sequence is ILFGNLGVSGFIFQLLLTMGI. Over 329–357 the chain is Lumenal; the sequence is QRERAGRGSLMTYTQLLYAVFWDVALYKH. Residues 358 to 378 traverse the membrane as a helical segment; it reads WPNIWSWIGMIIIISATLWVI. At 379-414 the chain is on the cytoplasmic side; it reads RIRAANNETTAKDLTPIIDDEENSIPLTEFDLSDSK.

The protein to yeast YPL264c.

The protein localises to the membrane. This is an uncharacterized protein from Saccharomyces cerevisiae (strain ATCC 204508 / S288c) (Baker's yeast).